The primary structure comprises 322 residues: Undecaprenyl-phosphate 4-deoxy-4-formamido-L-arabinose transferase (322 aa).

Residues 1–235 (MFEIHPVKKV…TCLTTTPLRM (235 aa)) are Cytoplasmic-facing. The chain crosses the membrane as a helical span at residues 236-256 (LSLLGSIIAIGGFSIAVLLVI). At 257–269 (LRLTFGPQWAAEG) the chain is on the periplasmic side. A helical transmembrane segment spans residues 270–290 (VFMLFAVLFTFIGAQFIGMGL). Residues 291–322 (LGEYIGRIYTDVRARPRYFVQQVIRPSSKENE) are Cytoplasmic-facing.

This sequence belongs to the glycosyltransferase 2 family.

Its subcellular location is the cell inner membrane. The catalysed reaction is UDP-4-deoxy-4-formamido-beta-L-arabinose + di-trans,octa-cis-undecaprenyl phosphate = 4-deoxy-4-formamido-alpha-L-arabinopyranosyl di-trans,octa-cis-undecaprenyl phosphate + UDP. It functions in the pathway glycolipid biosynthesis; 4-amino-4-deoxy-alpha-L-arabinose undecaprenyl phosphate biosynthesis; 4-amino-4-deoxy-alpha-L-arabinose undecaprenyl phosphate from UDP-4-deoxy-4-formamido-beta-L-arabinose and undecaprenyl phosphate: step 1/2. The protein operates within bacterial outer membrane biogenesis; lipopolysaccharide biosynthesis. Catalyzes the transfer of 4-deoxy-4-formamido-L-arabinose from UDP to undecaprenyl phosphate. The modified arabinose is attached to lipid A and is required for resistance to polymyxin and cationic antimicrobial peptides. This is Undecaprenyl-phosphate 4-deoxy-4-formamido-L-arabinose transferase from Shigella flexneri.